A 181-amino-acid polypeptide reads, in one-letter code: Large ribosomal subunit protein uL5 (181 aa).

Belongs to the universal ribosomal protein uL5 family. In terms of assembly, part of the 50S ribosomal subunit; part of the 5S rRNA/L5/L18/L25 subcomplex. Contacts the 5S rRNA and the P site tRNA. Forms a bridge to the 30S subunit in the 70S ribosome.

Its function is as follows. This is one of the proteins that bind and probably mediate the attachment of the 5S RNA into the large ribosomal subunit, where it forms part of the central protuberance. In the 70S ribosome it contacts protein S13 of the 30S subunit (bridge B1b), connecting the 2 subunits; this bridge is implicated in subunit movement. Contacts the P site tRNA; the 5S rRNA and some of its associated proteins might help stabilize positioning of ribosome-bound tRNAs. The protein is Large ribosomal subunit protein uL5 of Acaryochloris marina (strain MBIC 11017).